The primary structure comprises 334 residues: Probable prephenate dehydratase (334 aa).

Residues 7 to 224 (RVLFLGPKGT…NTTRFLVLKR (218 aa)) enclose the Prephenate dehydratase domain. The ACT domain maps to 244-322 (LTFTTRQDDP…SDKSKQWCLW (79 aa)).

It is found in the cytoplasm. It carries out the reaction prephenate + H(+) = 3-phenylpyruvate + CO2 + H2O. Its pathway is amino-acid biosynthesis; L-phenylalanine biosynthesis; phenylpyruvate from prephenate: step 1/1. In terms of biological role, catayzes the decarboxylation/dehydration of prephenate to phenylpyruvate. This chain is Probable prephenate dehydratase (PHA2), found in Saccharomyces cerevisiae (strain ATCC 204508 / S288c) (Baker's yeast).